The sequence spans 319 residues: Acetyl-coenzyme A carboxylase carboxyl transferase subunit alpha (319 aa).

Positions 35–296 (NIDEEVHRLR…KAQLLADLAD (262 aa)) constitute a CoA carboxyltransferase C-terminal domain.

It belongs to the AccA family. Acetyl-CoA carboxylase is a heterohexamer composed of biotin carboxyl carrier protein (AccB), biotin carboxylase (AccC) and two subunits each of ACCase subunit alpha (AccA) and ACCase subunit beta (AccD).

The protein resides in the cytoplasm. It carries out the reaction N(6)-carboxybiotinyl-L-lysyl-[protein] + acetyl-CoA = N(6)-biotinyl-L-lysyl-[protein] + malonyl-CoA. It participates in lipid metabolism; malonyl-CoA biosynthesis; malonyl-CoA from acetyl-CoA: step 1/1. Its function is as follows. Component of the acetyl coenzyme A carboxylase (ACC) complex. First, biotin carboxylase catalyzes the carboxylation of biotin on its carrier protein (BCCP) and then the CO(2) group is transferred by the carboxyltransferase to acetyl-CoA to form malonyl-CoA. In Klebsiella pneumoniae (strain 342), this protein is Acetyl-coenzyme A carboxylase carboxyl transferase subunit alpha.